A 312-amino-acid polypeptide reads, in one-letter code: Pyrimidine-specific ribonucleoside hydrolase RihA (312 aa).

H240 is a catalytic residue.

The protein belongs to the IUNH family. RihA subfamily.

Hydrolyzes cytidine or uridine to ribose and cytosine or uracil, respectively. This chain is Pyrimidine-specific ribonucleoside hydrolase RihA, found in Citrobacter koseri (strain ATCC BAA-895 / CDC 4225-83 / SGSC4696).